The following is a 1284-amino-acid chain: ATP-dependent helicase fft2 (1284 aa).

Polar residues-rich tracts occupy residues 1-10 (MLPYNSNYLS) and 20-57 (ENPQSEVYGSSQTGLPSSYGNPQSYGTPPVQQSSAMYG). Disordered regions lie at residues 1–57 (MLPY…AMYG), 185–252 (AQPP…LPPV), 317–339 (KQSPVASNMPTYGSSNRTVQSQK), 353–388 (STQASLMPSYTRKTSNASKKLTTEEDEFYDSEEEPE), and 446–465 (PDDVPSKPGRRGRRREKNPM). Residues 201-241 (RSNSRSSARSTARSAPRSTQRSRSSSANPVTTPPVNNTLLT) show a composition bias toward low complexity. Composition is skewed to polar residues over residues 320–339 (PVASNMPTYGSSNRTVQSQK) and 353–372 (STQASLMPSYTRKTSNASKK). At Ser323 the chain carries Phosphoserine. Positions 376 to 388 (EEDEFYDSEEEPE) are enriched in acidic residues. The residue at position 383 (Ser383) is a Phosphoserine. In terms of domain architecture, Helicase ATP-binding spans 562–730 (HLLYQQKLSG…VSLLAFILPN (169 aa)). 575 to 582 (DEMGLGKT) is an ATP binding site. The short motif at 681-684 (DEGH) is the DEGH box element. A disordered region spans residues 816–839 (QQLRRDDKRNKRSKNDEESDGKSL). Over residues 818–831 (LRRDDKRNKRSKND) the composition is skewed to basic and acidic residues. Residues 928–1079 (VLKELLPKMK…SLSSDGKDRE (152 aa)) enclose the Helicase C-terminal domain. Residues 1088–1284 (DMLDEENNGN…SEVDNNAAKD (197 aa)) are disordered. Residues 1095–1107 (NGNNTKPEITGNE) show a composition bias toward polar residues. Positions 1143–1177 (EKTDLADGDEKANIKTEMKSETVEGDNKELRETMK) are enriched in basic and acidic residues. The span at 1180 to 1194 (NVQTDSNAAVPSSKS) shows a compositional bias: polar residues. Basic and acidic residues-rich tracts occupy residues 1243 to 1256 (QLEKPEIEESKKPD) and 1266 to 1284 (EEEKPKNKESEVDNNAAKD).

This sequence belongs to the SNF2/RAD54 helicase family.

The protein resides in the cytoplasm. It is found in the nucleus. The enzyme catalyses ATP + H2O = ADP + phosphate + H(+). In terms of biological role, DNA helicase that possesses intrinsic ATP-dependent nucleosome-remodeling activity and is required for heterochromatin organization. The chain is ATP-dependent helicase fft2 (fft2) from Schizosaccharomyces pombe (strain 972 / ATCC 24843) (Fission yeast).